We begin with the raw amino-acid sequence, 205 residues long: Holliday junction branch migration complex subunit RuvA (205 aa).

Residues 1-64 are domain I; sequence MIGRLRGIVL…EDAQLLYGFN (64 aa). The segment at 65–143 is domain II; that stretch reads DKQERALFRE…GLNGDLFNQS (79 aa). The flexible linker stretch occupies residues 144-156; that stretch reads SDINLPATAKQTT. The interval 157–205 is domain III; sequence SDADSEAEAAAALVSLGYKPQEASRMVSKIAKPGADCETLIREALRAVL.

It belongs to the RuvA family. As to quaternary structure, homotetramer. Forms an RuvA(8)-RuvB(12)-Holliday junction (HJ) complex. HJ DNA is sandwiched between 2 RuvA tetramers; dsDNA enters through RuvA and exits via RuvB. An RuvB hexamer assembles on each DNA strand where it exits the tetramer. Each RuvB hexamer is contacted by two RuvA subunits (via domain III) on 2 adjacent RuvB subunits; this complex drives branch migration. In the full resolvosome a probable DNA-RuvA(4)-RuvB(12)-RuvC(2) complex forms which resolves the HJ.

Its subcellular location is the cytoplasm. The RuvA-RuvB-RuvC complex processes Holliday junction (HJ) DNA during genetic recombination and DNA repair, while the RuvA-RuvB complex plays an important role in the rescue of blocked DNA replication forks via replication fork reversal (RFR). RuvA specifically binds to HJ cruciform DNA, conferring on it an open structure. The RuvB hexamer acts as an ATP-dependent pump, pulling dsDNA into and through the RuvAB complex. HJ branch migration allows RuvC to scan DNA until it finds its consensus sequence, where it cleaves and resolves the cruciform DNA. This chain is Holliday junction branch migration complex subunit RuvA, found in Photorhabdus laumondii subsp. laumondii (strain DSM 15139 / CIP 105565 / TT01) (Photorhabdus luminescens subsp. laumondii).